The following is a 1009-amino-acid chain: Protein WBSCR14 homolog (1009 aa).

4 disordered regions span residues 1–20, 304–354, 488–531, and 686–728; these read MSRG…PHDD, MSLG…LHQM, NNQP…DPMM, and ILES…EQEA. 2 stretches are compositionally biased toward polar residues: residues 324 to 350 and 499 to 508; these read RTPT…SSAS and RSNLLPTQND. A compositionally biased stretch (low complexity) spans 511–526; the sequence is LPQFLQSTQPTPQPQS. Over residues 686–695 the composition is skewed to polar residues; it reads ILESPSTSGD. Positions 803–856 constitute a bHLH domain; sequence RKRILHLHAEQNRRSALKDGFDQLMDIIPDLYSGGVKPTNAVVLAKSADHIRRL. Residues 856–877 form a leucine-zipper region; the sequence is LQAEKWDKTQKIDEAKAKIEKL.

In terms of tissue distribution, expressed in intestine, neurons, muscle, hypodermis, excretory cell and other tissues.

It localises to the nucleus. The protein resides in the cytoplasm. Its subcellular location is the mitochondrion. In terms of biological role, transcription factor that binds to the E box motif 5'-CACGTG-3', probably in a heterodimeric complex with mxl-2. Involved in modulating longevity in response to TOR signaling, dietary restriction, the decline in protein homeostasis associated with normal aging, germline signaling and the insulin-like signaling pathway. Plays a role in autophagy. Involved in regulating migration of the ray 1 precursor cells in the male tail, acting in concert with Wnt and semaphorin signaling pathways. Regulates transcription of genes encoding extracellular matrix (ECM) components which may contribute to the substratum required for migration of the neighboring ray 1 precursor cells. Involved in repressing infection by the microsporidian pathogen N.parisii, probably acting independently of its canonical partner, mxl-2. This chain is Protein WBSCR14 homolog (mml-1), found in Caenorhabditis elegans.